The primary structure comprises 563 residues: NAD(P)H-quinone oxidoreductase chain 4 (563 aa).

The next 15 membrane-spanning stretches (helical) occupy residues 25–45 (FPWLSLSILFPIVGAFLVPFI), 56–76 (WFALGIALVTFVITVAAYLYG), 90–110 (VSWLPDLGLTWAVGADGISMP), 111–131 (LILLTSFITALAVLAAWPVTF), 133–153 (PKLFFFLILAMDGGQIAVFAV), 157–177 (LLFFLAWELELLPVYLLLAIW), 189–209 (FIIYTAGSSLFILLVALAMGF), 230–250 (GFQLLCYAGLLIAFGVKLPIV), 264–284 (TAPVHMLLAGILLKMGGYALM), 298–318 (FAPLLIVLGVVNIIYAALTSF), 335–355 (MGFVLIGIGSFSALGTSGAML), 356–376 (QMISHGLIGASLFFLVGATYD), 397–417 (FALWTVCALASLALPGMSGFV), 438–458 (IVIAGLAAIGVILTPIYLLSM), and 485–505 (VYIISCLLVPIIGIGLYPRLM).

It belongs to the complex I subunit 4 family.

The protein localises to the cellular thylakoid membrane. The enzyme catalyses a plastoquinone + NADH + (n+1) H(+)(in) = a plastoquinol + NAD(+) + n H(+)(out). The catalysed reaction is a plastoquinone + NADPH + (n+1) H(+)(in) = a plastoquinol + NADP(+) + n H(+)(out). Functionally, NDH-1 shuttles electrons from NAD(P)H, via FMN and iron-sulfur (Fe-S) centers, to quinones in the respiratory chain. The immediate electron acceptor for the enzyme in this species is believed to be plastoquinone. Couples the redox reaction to proton translocation (for every two electrons transferred, four hydrogen ions are translocated across the cytoplasmic membrane), and thus conserves the redox energy in a proton gradient. The chain is NAD(P)H-quinone oxidoreductase chain 4 from Prochlorococcus marinus (strain MIT 9303).